We begin with the raw amino-acid sequence, 209 residues long: NAD(P)H-quinone oxidoreductase subunit N, chloroplastic (209 aa).

The transit peptide at 1-45 (MGSRAICIQRVAPPCFEASQVKKIKTVGSFLVNTRSKRRRSTGVK) directs the protein to the chloroplast.

The protein belongs to the NDH complex subunit N family. As to quaternary structure, part of the chloroplast NDH complex, composed of a mixture of chloroplast and nucleus encoded subunits. Component of the NDH subcomplex A, at least composed of ndhH, ndhI, ndhJ, ndhK, ndhL, ndhM, ndhN and ndhO.

Its subcellular location is the plastid. It is found in the chloroplast thylakoid membrane. It catalyses the reaction a plastoquinone + NADH + (n+1) H(+)(in) = a plastoquinol + NAD(+) + n H(+)(out). The catalysed reaction is a plastoquinone + NADPH + (n+1) H(+)(in) = a plastoquinol + NADP(+) + n H(+)(out). NDH shuttles electrons from NAD(P)H:plastoquinone, via FMN and iron-sulfur (Fe-S) centers, to quinones in the photosynthetic chain and possibly in a chloroplast respiratory chain. The immediate electron acceptor for the enzyme in this species is believed to be plastoquinone. Couples the redox reaction to proton translocation, and thus conserves the redox energy in a proton gradient. In Arabidopsis thaliana (Mouse-ear cress), this protein is NAD(P)H-quinone oxidoreductase subunit N, chloroplastic.